We begin with the raw amino-acid sequence, 457 residues long: MTQKRLFGTDGIRGTANTAPMTAEIALRVGQAAGLLFTRGDHRHRVIIGKDTRLSGYMIEPALTAGFIGAGMDVTLVGPLPTPAIAMLTRSLRADLGVMISASHNPYEDNGIKLFGPDGEKLSDATEMEIERLLHADLSGQLAAPAALGRAARLEDAAGRYIESAKSTFPKSQRLDGLKIVLDCANGAAYRVAPTVLWELGATVIPLGVSPDGFNINSGCGSTAPDYLCAQVVKHGADLGIALDGDADRLLVSDERGHLVDGDQIIALIARSWSASGRLRGDGVVATVMSNLGLERFLKANGLILDRTRVGDRYVAEQMRATGRNIGGEQSGHVILSDYATTGDGLIAALQILSVLVEEGRPASETCRVFAPLPQKLKNVRYHRDNPLLHPRVKQAIADAESGLNGHGRLLIRRSGTEPLIRVMAEAEDETTVIRIVDELCDIIAVSAESETQVHLS.

Residue serine 103 is the Phosphoserine intermediate of the active site. Serine 103, aspartate 244, aspartate 246, and aspartate 248 together coordinate Mg(2+). Serine 103 carries the post-translational modification Phosphoserine.

The protein belongs to the phosphohexose mutase family. Mg(2+) is required as a cofactor. Activated by phosphorylation.

It catalyses the reaction alpha-D-glucosamine 1-phosphate = D-glucosamine 6-phosphate. Catalyzes the conversion of glucosamine-6-phosphate to glucosamine-1-phosphate. In Granulibacter bethesdensis (strain ATCC BAA-1260 / CGDNIH1), this protein is Phosphoglucosamine mutase.